A 166-amino-acid polypeptide reads, in one-letter code: Large ribosomal subunit protein uL10 (166 aa).

This sequence belongs to the universal ribosomal protein uL10 family. Part of the ribosomal stalk of the 50S ribosomal subunit. The N-terminus interacts with L11 and the large rRNA to form the base of the stalk. The C-terminus forms an elongated spine to which L12 dimers bind in a sequential fashion forming a multimeric L10(L12)X complex.

Its function is as follows. Forms part of the ribosomal stalk, playing a central role in the interaction of the ribosome with GTP-bound translation factors. The chain is Large ribosomal subunit protein uL10 from Aeromonas salmonicida (strain A449).